Reading from the N-terminus, the 242-residue chain is Uridylate kinase (242 aa).

An ATP-binding site is contributed by 16 to 19 (KVSG). UMP is bound at residue G58. Residues G59 and R63 each coordinate ATP. Residues D78 and 139–146 (TGNPFCTT) contribute to the UMP site. Residues T166, Q167, Y172, and D175 each coordinate ATP.

It belongs to the UMP kinase family. Homohexamer.

It is found in the cytoplasm. It catalyses the reaction UMP + ATP = UDP + ADP. The protein operates within pyrimidine metabolism; CTP biosynthesis via de novo pathway; UDP from UMP (UMPK route): step 1/1. Its activity is regulated as follows. Inhibited by UTP. In terms of biological role, catalyzes the reversible phosphorylation of UMP to UDP. The sequence is that of Uridylate kinase from Rickettsia felis (strain ATCC VR-1525 / URRWXCal2) (Rickettsia azadi).